Here is a 244-residue protein sequence, read N- to C-terminus: Protein A47 (244 aa).

This sequence belongs to the orthopoxvirus A47 protein family.

This Variola virus protein is Protein A47.